The primary structure comprises 629 residues: Arginine--tRNA ligase (629 aa).

The short motif at 128-138 (VNPTKPLHMGH) is the 'HIGH' region element.

The protein belongs to the class-I aminoacyl-tRNA synthetase family.

The protein resides in the cytoplasm. It catalyses the reaction tRNA(Arg) + L-arginine + ATP = L-arginyl-tRNA(Arg) + AMP + diphosphate. The sequence is that of Arginine--tRNA ligase from Pyrococcus furiosus (strain ATCC 43587 / DSM 3638 / JCM 8422 / Vc1).